The following is a 137-amino-acid chain: MRASPTSPPEQVVVDASAMVDLLARTSDRCSAVRARLARTAMHAPAHFDAEVLSALGRMQRAGALTVAYVDAALEELRQVPVTRHGLSSLLAGAWSRRDTLRLTDALYVELAETAGLVLLTTDERLARAWPSAHAIG.

The region spanning 12–129 (VVVDASAMVD…LTTDERLARA (118 aa)) is the PINc domain. 2 residues coordinate Mg(2+): aspartate 15 and aspartate 105.

The protein belongs to the PINc/VapC protein family. The cofactor is Mg(2+).

Its function is as follows. Toxic component of a type II toxin-antitoxin (TA) system. An RNase. Its toxic effect is neutralized by coexpression with cognate antitoxin VapB3. The sequence is that of Ribonuclease VapC3 from Mycobacterium tuberculosis (strain CDC 1551 / Oshkosh).